A 62-amino-acid chain; its full sequence is Alpha-conotoxin ViIA (62 aa).

A signal peptide spans 1–18 (MGMRMMFVVFLLVVFASS). A propeptide spanning residues 19–45 (VTLDRASYGRYASPVDRASALIAQAIL) is cleaved from the precursor. Intrachain disulfides connect Cys-48/Cys-54 and Cys-49/Cys-61.

This sequence belongs to the conotoxin A superfamily. The toxin is inactive on the alpha-3-beta-2 nAChR when the disulfide bond connectivity is C1-C4 and C2-C3 (ViIA-I) (IC(50)&gt;10000 nM). Expressed by the venom duct.

The protein localises to the secreted. In terms of biological role, alpha-conotoxins act on postsynaptic membranes, they bind to the nicotinic acetylcholine receptors (nAChR) and thus inhibit them. This toxin selectively inhibits nicotinic acetylcholine receptor (nAChR) alpha-3-beta-2 subtype (IC(50)=845.5 nM). The polypeptide is Alpha-conotoxin ViIA (Conus virgo (Virgin cone)).